The sequence spans 257 residues: MTDPLVRLEQITVAFDDRPVVDRVNLTVSRGDIVTIIGPNGAGKTTLIKTVLGIQRATSGQLSVAPGLVIGYVPQHLTLEPTLPLSVRRFMLLSGRTLADCTAALERTGVAHLLDASVHHLSGGEKQRLLLARALARKPDLLVLDEPAQGVDINGQATLYDLIRQLRDELHCGIIMISHDLHLVMAATDRVICLNQHVCCSGYPEDISQDPAFVETFGHQVAESLAVYHHHHNHRHNLHGDVVSSADAHEGCSHDHH.

The 216-residue stretch at V6–V221 folds into the ABC transporter domain. ATP is bound at residue G38–T45.

Belongs to the ABC transporter superfamily. Zinc importer (TC 3.A.1.15.5) family. As to quaternary structure, the complex is composed of two ATP-binding proteins (ZnuC), two transmembrane proteins (ZnuB) and a solute-binding protein (ZnuA).

The protein resides in the cell inner membrane. It carries out the reaction Zn(2+)(out) + ATP(in) + H2O(in) = Zn(2+)(in) + ADP(in) + phosphate(in) + H(+)(in). Functionally, part of the ABC transporter complex ZnuABC involved in zinc import. Responsible for energy coupling to the transport system. This Marinobacter nauticus (strain ATCC 700491 / DSM 11845 / VT8) (Marinobacter aquaeolei) protein is Zinc import ATP-binding protein ZnuC.